We begin with the raw amino-acid sequence, 753 residues long: 5-methyltetrahydropteroyltriglutamate--homocysteine methyltransferase (753 aa).

5-methyltetrahydropteroyltri-L-glutamate is bound by residues 17–20 (RELK) and Lys-117. L-homocysteine contacts are provided by residues 431-433 (IGS) and Glu-484. Residues 431–433 (IGS) and Glu-484 contribute to the L-methionine site. Residues 515–516 (RC) and Trp-561 contribute to the 5-methyltetrahydropteroyltri-L-glutamate site. Asp-599 contacts L-homocysteine. Asp-599 provides a ligand contact to L-methionine. 5-methyltetrahydropteroyltri-L-glutamate is bound at residue Glu-605. Zn(2+) is bound by residues His-641, Cys-643, and Glu-665. The active-site Proton donor is His-694. Position 726 (Cys-726) interacts with Zn(2+).

It belongs to the vitamin-B12 independent methionine synthase family. Zn(2+) serves as cofactor.

It carries out the reaction 5-methyltetrahydropteroyltri-L-glutamate + L-homocysteine = tetrahydropteroyltri-L-glutamate + L-methionine. Its pathway is amino-acid biosynthesis; L-methionine biosynthesis via de novo pathway; L-methionine from L-homocysteine (MetE route): step 1/1. In terms of biological role, catalyzes the transfer of a methyl group from 5-methyltetrahydrofolate to homocysteine resulting in methionine formation. In Escherichia coli (strain ATCC 8739 / DSM 1576 / NBRC 3972 / NCIMB 8545 / WDCM 00012 / Crooks), this protein is 5-methyltetrahydropteroyltriglutamate--homocysteine methyltransferase.